Here is a 260-residue protein sequence, read N- to C-terminus: MLEILYQDPWLVAVNKPAGWLVHRSWLDRDEKVVVMQTVRDQIGQHVFTAHRLDRPTSGVLLMGLSSEAGRRLAQQFEQHHIRKRYHAIVRGWLMDDAVLDYPLVEERDKIADKFAREDKAPQPAVTQYRGLATVEMAVPTGRYPTTRYGLVELEPKTGRKHQLRRHLAHLRHPIIGDSKHGDLRQNRSAAEHFACRRLMLHASRLELTHPFTGQPLIIQAGLDETWMQALTQFGWRGLLPDNERVEFTAASRQDETHLT.

Residue Asp54 is part of the active site.

Belongs to the pseudouridine synthase RluA family.

The catalysed reaction is uridine(65) in tRNA = pseudouridine(65) in tRNA. Responsible for synthesis of pseudouridine from uracil-65 in transfer RNAs. This chain is tRNA pseudouridine synthase C (truC), found in Salmonella typhimurium (strain LT2 / SGSC1412 / ATCC 700720).